A 632-amino-acid polypeptide reads, in one-letter code: Putative acetyl-CoA decarbonylase/synthase complex subunit alpha-like (632 aa).

[Ni-4Fe-4S] cluster is bound by residues His200, His226, Cys263, Cys379, Cys408, and Cys438.

The protein belongs to the Ni-containing carbon monoxide dehydrogenase family.

Its function is as follows. Part of the ACDS complex that catalyzes the reversible cleavage of acetyl-CoA, allowing autotrophic growth from CO(2). The alpha-epsilon subcomponent functions as a carbon monoxide dehydrogenase. The protein is Putative acetyl-CoA decarbonylase/synthase complex subunit alpha-like (cdhA2) of Methanopyrus kandleri (strain AV19 / DSM 6324 / JCM 9639 / NBRC 100938).